Here is an 864-residue protein sequence, read N- to C-terminus: Leucine--tRNA ligase (864 aa).

The 'HIGH' region motif lies at 42-52; sequence PYPSGKLHMGH. The 'KMSKS' region motif lies at 624-628; that stretch reads KMSKS. Residue Lys627 coordinates ATP.

Belongs to the class-I aminoacyl-tRNA synthetase family.

It localises to the cytoplasm. The enzyme catalyses tRNA(Leu) + L-leucine + ATP = L-leucyl-tRNA(Leu) + AMP + diphosphate. This is Leucine--tRNA ligase from Burkholderia vietnamiensis (strain G4 / LMG 22486) (Burkholderia cepacia (strain R1808)).